Reading from the N-terminus, the 156-residue chain is CASP-like protein 5C1 (156 aa).

The Cytoplasmic segment spans residues 1 to 24 (MENRERAGAGAVGSAGSLGLRVEQ). The helical transmembrane segment at 25–45 (AVFSSASLLFMSVGVEFFSYT) threads the bilayer. A topological domain (extracellular) is located at residue Ala-46. A helical transmembrane segment spans residues 47–67 (FCFLVTIMGLVIPWSCTLAMI). Residues 68–81 (DVYSILVGCPLRVP) are Cytoplasmic-facing. Residues 82–102 (GVMVIVVIGDWVLAILSLAAA) traverse the membrane as a helical segment. The Extracellular portion of the chain corresponds to 103–132 (SSSAAVIDLLLQFHGSHCSPRFCGRYQLSA). A helical membrane pass occupies residues 133–153 (MMAFLSWFLTAASSLFNLWFI). Topologically, residues 154–156 (ASR) are cytoplasmic.

This sequence belongs to the Casparian strip membrane proteins (CASP) family. In terms of assembly, homodimer and heterodimers.

It localises to the cell membrane. The polypeptide is CASP-like protein 5C1 (Oryza sativa subsp. indica (Rice)).